Reading from the N-terminus, the 65-residue chain is Large ribosomal subunit protein bL35 (65 aa).

Positions 1–26 (MPKMKTHRGAAKRFRKTGTGKLKRGK) are disordered.

The protein belongs to the bacterial ribosomal protein bL35 family.

The protein is Large ribosomal subunit protein bL35 of Clostridium beijerinckii (strain ATCC 51743 / NCIMB 8052) (Clostridium acetobutylicum).